The following is a 398-amino-acid chain: MIIKPRVRGFICVSTHPTGCEANVREQIDYVKARGPIANGPKKVLVIGASTGYGLAARISAAFGSDAATLGVFFERAGSETKAGTAGWYNTAAFEKFATEKGLYATSINGDAFSDEVKARTIEVIKRDLGQVDLVVYSLAAPKRTHPKSGEVFSSTLKPVGKAVNLRGIDTDKEVIKETVLEPATQKEIDDTVAVMGGEDWQMWIDALLEAGVLADGAKTTAFTYLGEKITHDIYWNGSIGAAKKDLDQKVLGIREKLAAKGGDARVSVLKAVVTQASSAIPMMPLYLSLLFKVMKEKGTHEGCIEQVYGLYKDSLYGAAPHIDEEGRLRADYKELDPEVQNRVQELWTQVTNDNIYELTDFSGYKTDFLRLFGFEIAGVDYEADVNPDVQIPKLVQV.

NAD(+)-binding positions include 48-53, 74-75, 111-112, and 139-140; these read GASTGY, FE, DA, and LA. Tyr-225 lines the substrate pocket. Tyr-235 (proton donor) is an active-site residue. NAD(+)-binding positions include Lys-244 and 273 to 275; that span reads VVT.

It belongs to the TER reductase family. Monomer.

It carries out the reaction a 2,3-saturated acyl-[ACP] + NAD(+) = a (2E)-enoyl-[ACP] + NADH + H(+). The protein operates within lipid metabolism; fatty acid biosynthesis. In terms of biological role, involved in the final reduction of the elongation cycle of fatty acid synthesis (FAS II). Catalyzes the reduction of a carbon-carbon double bond in an enoyl moiety that is covalently linked to an acyl carrier protein (ACP). The sequence is that of Enoyl-[acyl-carrier-protein] reductase [NADH] from Paraburkholderia phytofirmans (strain DSM 17436 / LMG 22146 / PsJN) (Burkholderia phytofirmans).